A 285-amino-acid polypeptide reads, in one-letter code: Pantothenate synthetase (285 aa).

30–37 serves as a coordination point for ATP; sequence MGNLHDGH. The active-site Proton donor is the histidine 37. A (R)-pantoate-binding site is contributed by glutamine 61. Position 61 (glutamine 61) interacts with beta-alanine. 149–152 is a binding site for ATP; it reads GEKD. Glutamine 155 serves as a coordination point for (R)-pantoate. Residues isoleucine 178 and 186-189 contribute to the ATP site; that span reads FSSR.

This sequence belongs to the pantothenate synthetase family. As to quaternary structure, homodimer.

The protein localises to the cytoplasm. The enzyme catalyses (R)-pantoate + beta-alanine + ATP = (R)-pantothenate + AMP + diphosphate + H(+). It participates in cofactor biosynthesis; (R)-pantothenate biosynthesis; (R)-pantothenate from (R)-pantoate and beta-alanine: step 1/1. Its function is as follows. Catalyzes the condensation of pantoate with beta-alanine in an ATP-dependent reaction via a pantoyl-adenylate intermediate. The chain is Pantothenate synthetase from Buchnera aphidicola subsp. Schizaphis graminum (strain Sg).